Here is a 374-residue protein sequence, read N- to C-terminus: Succinyl-diaminopimelate desuccinylase (374 aa).

Residue His-66 coordinates Zn(2+). Asp-68 is an active-site residue. Residue Asp-99 participates in Zn(2+) binding. The active-site Proton acceptor is the Glu-133. Residues Glu-134, Glu-162, and His-348 each coordinate Zn(2+).

This sequence belongs to the peptidase M20A family. DapE subfamily. Homodimer. Zn(2+) serves as cofactor. The cofactor is Co(2+).

It catalyses the reaction N-succinyl-(2S,6S)-2,6-diaminopimelate + H2O = (2S,6S)-2,6-diaminopimelate + succinate. It participates in amino-acid biosynthesis; L-lysine biosynthesis via DAP pathway; LL-2,6-diaminopimelate from (S)-tetrahydrodipicolinate (succinylase route): step 3/3. Its function is as follows. Catalyzes the hydrolysis of N-succinyl-L,L-diaminopimelic acid (SDAP), forming succinate and LL-2,6-diaminopimelate (DAP), an intermediate involved in the bacterial biosynthesis of lysine and meso-diaminopimelic acid, an essential component of bacterial cell walls. The polypeptide is Succinyl-diaminopimelate desuccinylase (Coxiella burnetii (strain CbuK_Q154) (Coxiella burnetii (strain Q154))).